A 106-amino-acid chain; its full sequence is UPF0060 membrane protein Csal_2746 (106 aa).

4 helical membrane-spanning segments follow: residues 6 to 26 (LLFIATAMAEIIGCYLPWLWL), 31 to 51 (SPWLLVPAAASLTLFVWLLSL), 59 to 79 (VYAAYGGVYVVCALVWLWGVD), and 85 to 105 (PTDWIGAALALTGMGVIASGW).

It belongs to the UPF0060 family.

Its subcellular location is the cell inner membrane. The protein is UPF0060 membrane protein Csal_2746 of Chromohalobacter salexigens (strain ATCC BAA-138 / DSM 3043 / CIP 106854 / NCIMB 13768 / 1H11).